The primary structure comprises 179 residues: NADH-quinone oxidoreductase subunit B 1 (179 aa).

4 residues coordinate [4Fe-4S] cluster: C38, C39, C104, and C133.

The protein belongs to the complex I 20 kDa subunit family. As to quaternary structure, NDH-1 is composed of 14 different subunits. Subunits NuoB, C, D, E, F, and G constitute the peripheral sector of the complex. It depends on [4Fe-4S] cluster as a cofactor.

The protein localises to the cell membrane. It carries out the reaction a quinone + NADH + 5 H(+)(in) = a quinol + NAD(+) + 4 H(+)(out). NDH-1 shuttles electrons from NADH, via FMN and iron-sulfur (Fe-S) centers, to quinones in the respiratory chain. The immediate electron acceptor for the enzyme in this species is believed to be ubiquinone. Couples the redox reaction to proton translocation (for every two electrons transferred, four hydrogen ions are translocated across the cytoplasmic membrane), and thus conserves the redox energy in a proton gradient. The sequence is that of NADH-quinone oxidoreductase subunit B 1 from Herpetosiphon aurantiacus (strain ATCC 23779 / DSM 785 / 114-95).